The following is a 185-amino-acid chain: MRNLVKYVGIGLLVMGLAACDDKDTNATAQGSVAESNATGNPVNLLDGKLSFSLPADMTDQSGKLGTQANNMHVWSDATGQKAVIVIMGDDPKEDLAVLAKRLEDQQRSRDPQLQVVTNKAIELKGHKMQQLDSIISAKGQTAYSSVILGNVGNQLLTMQITLPADDQQKAQTTAENIINTLVIQ.

The first 19 residues, 1-19, serve as a signal peptide directing secretion; that stretch reads MRNLVKYVGIGLLVMGLAA. A lipid anchor (N-palmitoyl cysteine) is attached at Cys-20. Cys-20 carries the S-diacylglycerol cysteine lipid modification.

The protein belongs to the DcrB family.

Its subcellular location is the cell membrane. Its function is as follows. Plays a role in cell envelope biogenesis, maintenance of cell envelope integrity and membrane homeostasis. Essential for lipoprotein maturation under conditions where membrane fluidity may be altered. The sequence is that of Inner membrane lipoprotein DcrB from Shigella flexneri.